Consider the following 518-residue polypeptide: GMP synthase [glutamine-hydrolyzing] (518 aa).

In terms of domain architecture, Glutamine amidotransferase type-1 spans 11-203; that stretch reads SILVLDFGSQ…AFDVCQAEAN (193 aa). Residue cysteine 88 is the Nucleophile of the active site. Residues histidine 177 and glutamate 179 contribute to the active site. Residues 204 to 393 form the GMPS ATP-PPase domain; that stretch reads WSMDDFIDMQ…LGMPSDLVWR (190 aa). ATP is bound at residue 231–237; it reads SGGVDSS.

In terms of assembly, homodimer.

It catalyses the reaction XMP + L-glutamine + ATP + H2O = GMP + L-glutamate + AMP + diphosphate + 2 H(+). It functions in the pathway purine metabolism; GMP biosynthesis; GMP from XMP (L-Gln route): step 1/1. In terms of biological role, catalyzes the synthesis of GMP from XMP. The polypeptide is GMP synthase [glutamine-hydrolyzing] (Lactiplantibacillus plantarum (strain ATCC BAA-793 / NCIMB 8826 / WCFS1) (Lactobacillus plantarum)).